The following is a 381-amino-acid chain: 4-hydroxy-3-methylbut-2-en-1-yl diphosphate synthase (flavodoxin) (381 aa).

Residues Cys-280, Cys-283, Cys-315, and Glu-322 each coordinate [4Fe-4S] cluster.

The protein belongs to the IspG family. The cofactor is [4Fe-4S] cluster.

It catalyses the reaction (2E)-4-hydroxy-3-methylbut-2-enyl diphosphate + oxidized [flavodoxin] + H2O + 2 H(+) = 2-C-methyl-D-erythritol 2,4-cyclic diphosphate + reduced [flavodoxin]. Its pathway is isoprenoid biosynthesis; isopentenyl diphosphate biosynthesis via DXP pathway; isopentenyl diphosphate from 1-deoxy-D-xylulose 5-phosphate: step 5/6. Its function is as follows. Converts 2C-methyl-D-erythritol 2,4-cyclodiphosphate (ME-2,4cPP) into 1-hydroxy-2-methyl-2-(E)-butenyl 4-diphosphate. The sequence is that of 4-hydroxy-3-methylbut-2-en-1-yl diphosphate synthase (flavodoxin) from Clavibacter sepedonicus (Clavibacter michiganensis subsp. sepedonicus).